A 616-amino-acid polypeptide reads, in one-letter code: Chaperone protein HscA (616 aa).

The protein belongs to the heat shock protein 70 family.

Its function is as follows. Chaperone involved in the maturation of iron-sulfur cluster-containing proteins. Has a low intrinsic ATPase activity which is markedly stimulated by HscB. Involved in the maturation of IscU. This chain is Chaperone protein HscA, found in Escherichia fergusonii (strain ATCC 35469 / DSM 13698 / CCUG 18766 / IAM 14443 / JCM 21226 / LMG 7866 / NBRC 102419 / NCTC 12128 / CDC 0568-73).